Reading from the N-terminus, the 195-residue chain is Peptidyl-tRNA hydrolase (195 aa).

Tyrosine 17 contacts tRNA. Histidine 22 acts as the Proton acceptor in catalysis. Residues phenylalanine 68, asparagine 70, and asparagine 116 each contribute to the tRNA site.

This sequence belongs to the PTH family. As to quaternary structure, monomer.

The protein resides in the cytoplasm. It catalyses the reaction an N-acyl-L-alpha-aminoacyl-tRNA + H2O = an N-acyl-L-amino acid + a tRNA + H(+). Hydrolyzes ribosome-free peptidyl-tRNAs (with 1 or more amino acids incorporated), which drop off the ribosome during protein synthesis, or as a result of ribosome stalling. Its function is as follows. Catalyzes the release of premature peptidyl moieties from peptidyl-tRNA molecules trapped in stalled 50S ribosomal subunits, and thus maintains levels of free tRNAs and 50S ribosomes. The polypeptide is Peptidyl-tRNA hydrolase (Pectobacterium atrosepticum (strain SCRI 1043 / ATCC BAA-672) (Erwinia carotovora subsp. atroseptica)).